We begin with the raw amino-acid sequence, 232 residues long: 7-cyano-7-deazaguanine synthase (232 aa).

8–18 (FSGGQDSTTCL) contacts ATP. The Zn(2+) site is built by Cys187, Cys196, Cys199, and Cys202.

It belongs to the QueC family. The cofactor is Zn(2+).

The enzyme catalyses 7-carboxy-7-deazaguanine + NH4(+) + ATP = 7-cyano-7-deazaguanine + ADP + phosphate + H2O + H(+). It participates in purine metabolism; 7-cyano-7-deazaguanine biosynthesis. Catalyzes the ATP-dependent conversion of 7-carboxy-7-deazaguanine (CDG) to 7-cyano-7-deazaguanine (preQ(0)). The sequence is that of 7-cyano-7-deazaguanine synthase from Vibrio vulnificus (strain YJ016).